Reading from the N-terminus, the 101-residue chain is Small ribosomal subunit protein uS14 (101 aa).

This sequence belongs to the universal ribosomal protein uS14 family. Part of the 30S ribosomal subunit. Contacts proteins S3 and S10.

In terms of biological role, binds 16S rRNA, required for the assembly of 30S particles and may also be responsible for determining the conformation of the 16S rRNA at the A site. In Cronobacter sakazakii (strain ATCC BAA-894) (Enterobacter sakazakii), this protein is Small ribosomal subunit protein uS14.